The primary structure comprises 154 residues: Ribonuclease H (154 aa).

The region spanning M1–E141 is the RNase H type-1 domain. Residues D9, E47, D69, and D133 each coordinate Mg(2+).

It belongs to the RNase H family. Monomer. Mg(2+) is required as a cofactor.

The protein resides in the cytoplasm. It catalyses the reaction Endonucleolytic cleavage to 5'-phosphomonoester.. Functionally, endonuclease that specifically degrades the RNA of RNA-DNA hybrids. The sequence is that of Ribonuclease H from Brucella abortus (strain 2308).